Reading from the N-terminus, the 426-residue chain is SrfA-induced gene K protein (426 aa).

The signal sequence occupies residues 1–23 (MKKMKILSFFILSLAIIIGIVYS). 4 N-linked (GlcNAc...) asparagine glycosylation sites follow: Asn64, Asn136, Asn160, and Asn226. Laminin EGF-like domains follow at residues 325–348 (DNQCQCSVGFSGDDCRQCDNGMVL) and 384–408 (CNGTCTCLPGFSGNDCTLCGNGGEV). Intrachain disulfides connect Cys330-Cys339, Cys342-Cys358, and Cys370-Cys388. Asn385 carries an N-linked (GlcNAc...) asparagine glycan.

The chain is SrfA-induced gene K protein (sigK) from Dictyostelium discoideum (Social amoeba).